The sequence spans 212 residues: Large ribosomal subunit protein uL3 (212 aa).

Polar residues predominate over residues 140–155 (SVSHRAIGSTGQNQSP). Residues 140-166 (SVSHRAIGSTGQNQSPGKVFKGKKMPG) form a disordered region. Glutamine 153 is modified (N5-methylglutamine).

The protein belongs to the universal ribosomal protein uL3 family. Part of the 50S ribosomal subunit. Forms a cluster with proteins L14 and L19. Post-translationally, methylated by PrmB.

Its function is as follows. One of the primary rRNA binding proteins, it binds directly near the 3'-end of the 23S rRNA, where it nucleates assembly of the 50S subunit. The sequence is that of Large ribosomal subunit protein uL3 from Psychrobacter cryohalolentis (strain ATCC BAA-1226 / DSM 17306 / VKM B-2378 / K5).